Reading from the N-terminus, the 163-residue chain is Type-2 ice-structuring protein (163 aa).

A signal peptide spans methionine 1–alanine 17. A propeptide spanning residues asparagine 18–serine 34 is cleaved from the precursor. One can recognise a C-type lectin domain in the interval proline 39–phenylalanine 163. Disulfide bonds link cysteine 41–cysteine 52, cysteine 69–cysteine 159, cysteine 103–cysteine 134, cysteine 123–cysteine 145, and cysteine 135–cysteine 151.

In terms of processing, the N-terminus is blocked.

It localises to the secreted. Antifreeze proteins lower the blood freezing point. The sequence is that of Type-2 ice-structuring protein from Hemitripterus americanus (Sea raven).